The following is a 350-amino-acid chain: Carbamoyl dehydratase HypE (350 aa).

At Cys-350 the chain carries S-carbamoylcysteine. Cys-350 carries the S-cyanocysteine modification.

Belongs to the HypE family. Post-translationally, modified by HypF, which adds a carboxamido group to the thiolate of the C-terminal cysteine, yielding a protein-S-carboxamide. The carboxamido group is then dehydrated by HypE itself to yield a protein-thiocyanate.

It catalyses the reaction C-terminal S-carboxamide-L-cysteinyl-[HypE protein] + ATP = C-terminal S-cyanate-L-cysteinyl-[HypE protein] + ADP + phosphate + H(+). The protein operates within protein modification; [NiFe] hydrogenase maturation. In terms of biological role, involved in the maturation of [NiFe] hydrogenases. Along with HypF, it catalyzes the synthesis of the CN ligands of the active site iron of [NiFe]-hydrogenases. HypE catalyzes the ATP-dependent dehydration of the carboxamido group attached to its C-terminal cysteine to a cyano group. The chain is Carbamoyl dehydratase HypE from Rhizobium leguminosarum bv. viciae.